The sequence spans 831 residues: Phenylalanine--tRNA ligase beta subunit (831 aa).

In terms of domain architecture, tRNA-binding spans 42–157 (ADISGPIVVG…GFAEPGTKAD (116 aa)). The B5 domain occupies 408 to 483 (VPREPIVVRA…RNEGYENIPA (76 aa)). Residues Asp461, Asp467, Glu470, and Glu471 each contribute to the Mg(2+) site. In terms of domain architecture, FDX-ACB spans 737–830 (STYPVATQDV…AAERTGAVLR (94 aa)).

Belongs to the phenylalanyl-tRNA synthetase beta subunit family. Type 1 subfamily. Tetramer of two alpha and two beta subunits. It depends on Mg(2+) as a cofactor.

Its subcellular location is the cytoplasm. The catalysed reaction is tRNA(Phe) + L-phenylalanine + ATP = L-phenylalanyl-tRNA(Phe) + AMP + diphosphate + H(+). The polypeptide is Phenylalanine--tRNA ligase beta subunit (Thermobifida fusca (strain YX)).